Reading from the N-terminus, the 350-residue chain is Biotin synthase (350 aa).

The Radical SAM core domain maps to 54–278 (REIQLSTLLS…TMPQSYVRLS (225 aa)). [4Fe-4S] cluster is bound by residues cysteine 69, cysteine 73, and cysteine 76. [2Fe-2S] cluster-binding residues include cysteine 113, cysteine 144, cysteine 204, and arginine 276.

It belongs to the radical SAM superfamily. Biotin synthase family. Homodimer. The cofactor is [4Fe-4S] cluster. It depends on [2Fe-2S] cluster as a cofactor.

The enzyme catalyses (4R,5S)-dethiobiotin + (sulfur carrier)-SH + 2 reduced [2Fe-2S]-[ferredoxin] + 2 S-adenosyl-L-methionine = (sulfur carrier)-H + biotin + 2 5'-deoxyadenosine + 2 L-methionine + 2 oxidized [2Fe-2S]-[ferredoxin]. The protein operates within cofactor biosynthesis; biotin biosynthesis; biotin from 7,8-diaminononanoate: step 2/2. Catalyzes the conversion of dethiobiotin (DTB) to biotin by the insertion of a sulfur atom into dethiobiotin via a radical-based mechanism. The polypeptide is Biotin synthase (Neisseria meningitidis serogroup B (strain ATCC BAA-335 / MC58)).